The sequence spans 55 residues: Large ribosomal subunit protein bL33 (55 aa).

The protein belongs to the bacterial ribosomal protein bL33 family.

This chain is Large ribosomal subunit protein bL33, found in Kocuria rhizophila (strain ATCC 9341 / DSM 348 / NBRC 103217 / DC2201).